Reading from the N-terminus, the 718-residue chain is Mitochondrial potassium channel ATP-binding subunit (718 aa).

The N-terminal 25 residues, 1–25 (MLVHLFRVGIRGGPFPGRLLPPLRF), are a transit peptide targeting the mitochondrion. Transmembrane regions (helical) follow at residues 128–148 (LLVL…NVQI), 179–199 (THLL…LVLL), and 279–299 (LLLM…GSGL). The 288-residue stretch at 133-420 (VAVVLALGAA…LSVLFGQVVR (288 aa)) folds into the ABC transmembrane type-1 domain. One can recognise an ABC transporter domain in the interval 455–692 (VTFQNVCFSY…GGLYAELIRR (238 aa)). 490–497 (GQSGGGKT) lines the ATP pocket. Positions 697-718 (APRTAAPLPKKPEGPRNHQHKS) are disordered.

It belongs to the ABC transporter superfamily. ABCB family. Multidrug resistance exporter (TC 3.A.1.201) subfamily. In terms of assembly, the mitochondrial potassium channel (mitoK(ATP)) is composed of 4 subunits of CCDC51/MITOK and 4 subunits of ABCB8/MITOSUR. Physically interacts with PAAT. Interacts with Neuropilin-1 (NRP1) in mitochondria.

It is found in the mitochondrion inner membrane. Channel activity inhibited by ATP via ABCB8/MITOSUR subunit. ATP-binding subunit of the mitochondrial ATP-gated potassium channel (mitoK(ATP)). Together with pore-forming subunit CCDC51/MITOK of the mitoK(ATP) channel, mediates ATP-dependent potassium currents across the mitochondrial inner membrane. An increase in ATP intracellular levels closes the channel, inhibiting K(+) transport, whereas a decrease in ATP levels enhances K(+) uptake in the mitochondrial matrix. Plays a role in mitochondrial iron transport. Required for maintenance of normal cardiac function, possibly by influencing mitochondrial iron export and regulating the maturation of cytosolic iron sulfur cluster-containing enzymes. In Pongo abelii (Sumatran orangutan), this protein is Mitochondrial potassium channel ATP-binding subunit (ABCB8).